Here is a 219-residue protein sequence, read N- to C-terminus: Envelope protein US9 homolog (219 aa).

Residues 1 to 193 lie on the Intravirion side of the membrane; the sequence is MEKAEAAAVV…RHRRRRVALT (193 aa). The Di-leucine internalization motif motif lies at 145–146; sequence LL. Residues 153–168 are acidic; sequence DYDSESGCYYSESDNE. Phosphoserine; by host CK2 is present on residues serine 163 and serine 165. A helical; Signal-anchor for type II membrane protein membrane pass occupies residues 194–214; that stretch reads VAGVILVVVLCAISGIVGAFL. Residues 215 to 219 lie on the Virion surface side of the membrane; that stretch reads ARVFP.

Belongs to the alphaherpesvirinae envelope protein US9 family. In terms of processing, phosphorylated on serines within the acidic cluster. Phosphorylation determines whether endocytosed viral US9 traffics to the trans-Golgi network or recycles to the cell membrane.

The protein resides in the virion membrane. It is found in the host Golgi apparatus membrane. The protein localises to the host smooth endoplasmic reticulum membrane. Its subcellular location is the host cell membrane. Its function is as follows. Essential for the anterograde spread of the infection throughout the host nervous system. Together with the gE/gI heterodimer, US9 is involved in the sorting and transport of viral structural components toward axon tips. This Equine herpesvirus 1 (strain Kentucky A) (EHV-1) protein is Envelope protein US9 homolog.